Here is a 255-residue protein sequence, read N- to C-terminus: Endonuclease V (255 aa).

Mg(2+) is bound by residues aspartate 42 and aspartate 110.

This sequence belongs to the endonuclease V family. Mg(2+) is required as a cofactor.

Its subcellular location is the cytoplasm. It catalyses the reaction Endonucleolytic cleavage at apurinic or apyrimidinic sites to products with a 5'-phosphate.. Its function is as follows. DNA repair enzyme involved in the repair of deaminated bases. Selectively cleaves double-stranded DNA at the second phosphodiester bond 3' to a deoxyinosine leaving behind the intact lesion on the nicked DNA. The protein is Endonuclease V of Aeropyrum pernix (strain ATCC 700893 / DSM 11879 / JCM 9820 / NBRC 100138 / K1).